The primary structure comprises 210 residues: Probable GTP-binding protein EngB (210 aa).

The EngB-type G domain occupies 25 to 199 (TGIEVAFAGR…RQKLDSWFNE (175 aa)). Residues 33–40 (GRSNAGKS), 60–64 (GRTQL), 78–81 (DLPG), 145–148 (TKAD), and 178–180 (FSS) each bind GTP. Residues S40 and T62 each coordinate Mg(2+).

This sequence belongs to the TRAFAC class TrmE-Era-EngA-EngB-Septin-like GTPase superfamily. EngB GTPase family. The cofactor is Mg(2+).

Necessary for normal cell division and for the maintenance of normal septation. This chain is Probable GTP-binding protein EngB, found in Klebsiella pneumoniae subsp. pneumoniae (strain ATCC 700721 / MGH 78578).